Consider the following 325-residue polypeptide: Ribose-phosphate pyrophosphokinase (325 aa).

ATP contacts are provided by residues 45 to 47 and 104 to 105; these read NGE and RQ. 2 residues coordinate Mg(2+): His138 and Asp178. Residue Lys202 is part of the active site. D-ribose 5-phosphate is bound by residues Arg204, Asp230, and 234 to 238; that span reads DTGGT.

This sequence belongs to the ribose-phosphate pyrophosphokinase family. Class I subfamily. In terms of assembly, homohexamer. It depends on Mg(2+) as a cofactor.

Its subcellular location is the cytoplasm. The enzyme catalyses D-ribose 5-phosphate + ATP = 5-phospho-alpha-D-ribose 1-diphosphate + AMP + H(+). It participates in metabolic intermediate biosynthesis; 5-phospho-alpha-D-ribose 1-diphosphate biosynthesis; 5-phospho-alpha-D-ribose 1-diphosphate from D-ribose 5-phosphate (route I): step 1/1. In terms of biological role, involved in the biosynthesis of the central metabolite phospho-alpha-D-ribosyl-1-pyrophosphate (PRPP) via the transfer of pyrophosphoryl group from ATP to 1-hydroxyl of ribose-5-phosphate (Rib-5-P). The chain is Ribose-phosphate pyrophosphokinase from Corynebacterium glutamicum (strain ATCC 13032 / DSM 20300 / JCM 1318 / BCRC 11384 / CCUG 27702 / LMG 3730 / NBRC 12168 / NCIMB 10025 / NRRL B-2784 / 534).